The sequence spans 362 residues: Peptide chain release factor 1 (362 aa).

N5-methylglutamine is present on Gln-237. Residues Glu-284–Thr-295 show a composition bias toward basic and acidic residues. A disordered region spans residues Glu-284–Asp-304.

It belongs to the prokaryotic/mitochondrial release factor family. Post-translationally, methylated by PrmC. Methylation increases the termination efficiency of RF1.

It is found in the cytoplasm. Its function is as follows. Peptide chain release factor 1 directs the termination of translation in response to the peptide chain termination codons UAG and UAA. This chain is Peptide chain release factor 1, found in Pseudoalteromonas atlantica (strain T6c / ATCC BAA-1087).